Reading from the N-terminus, the 388-residue chain is Succinate--CoA ligase [ADP-forming] subunit beta (388 aa).

The 236-residue stretch at 9–244 folds into the ATP-grasp domain; it reads KQLFAEFGLP…PSQEDEREAH (236 aa). ATP contacts are provided by residues lysine 46, 53-55, glutamate 99, serine 102, and glutamate 107; that span reads GRG. Residues asparagine 199 and aspartate 213 each coordinate Mg(2+). Substrate-binding positions include asparagine 264 and 321–323; that span reads GIV.

It belongs to the succinate/malate CoA ligase beta subunit family. As to quaternary structure, heterotetramer of two alpha and two beta subunits. The cofactor is Mg(2+).

It carries out the reaction succinate + ATP + CoA = succinyl-CoA + ADP + phosphate. The enzyme catalyses GTP + succinate + CoA = succinyl-CoA + GDP + phosphate. Its pathway is carbohydrate metabolism; tricarboxylic acid cycle; succinate from succinyl-CoA (ligase route): step 1/1. Its function is as follows. Succinyl-CoA synthetase functions in the citric acid cycle (TCA), coupling the hydrolysis of succinyl-CoA to the synthesis of either ATP or GTP and thus represents the only step of substrate-level phosphorylation in the TCA. The beta subunit provides nucleotide specificity of the enzyme and binds the substrate succinate, while the binding sites for coenzyme A and phosphate are found in the alpha subunit. In Vibrio parahaemolyticus serotype O3:K6 (strain RIMD 2210633), this protein is Succinate--CoA ligase [ADP-forming] subunit beta.